The sequence spans 671 residues: MADPASYRPQTGEIPTTPGVYRFRDPHGRVIYVGKAKNLRSRLNSYFANPAGLLPKTHAMVHAASSVEWTVVGSELESLQLEYTWIKEFKPRFNVVFRDDKTYPYLAVTMGEKYPRVQVMRGERRKGTRYFGPYTAGAIRETMDTLLRVFPVRSCSAGVFKRAESSGRPCLLGYIDKCSAPCVGRVTPDEHRGLAEDFCSFMGGEAKRFISRLEKDMAAAVAELDYERAAGLRDDIIALRKVFERNAVVLAEDTDADVFALHEDELEASVQVFHVRGGRVRGQRGWVVEKVEDATTPELIEHLLQQVYGEDSEVQGRIPREVLVPENPSNHAELMEWLGGLRGARVDIRVPQRGDKAALMSTVRENAEQALKLHKTRRAGDITVRSLALQELQEALEIPVPLLRIECFDISHVQGTNVVASMVVVEDGLPKKSDYRKFSITGAAATDDTAAMHDVLTRRFRHYLTDKAAQVPIVSGEIVNPTRAGAKSGTELPPSDLDVPAPKAKFAYPPNLVVVDGGQPQVNAAARALAELGIDDVYVVGLAKRLEEVWLPDSDFPVILPRTSQGLYLLQRIRDEAHRFAITFHRQKRGKAMTVSVLDGVPGLGEAKRKALVAHFGSLKKIKAASVEELTSAKGIGPALAAAVVQHLGSTEDAGERAPAVNMTTGEILES.

Positions 16-95 (TTPGVYRFRD…IKEFKPRFNV (80 aa)) constitute a GIY-YIG domain. In terms of domain architecture, UVR spans 207–242 (KRFISRLEKDMAAAVAELDYERAAGLRDDIIALRKV).

The protein belongs to the UvrC family. As to quaternary structure, interacts with UvrB in an incision complex.

The protein localises to the cytoplasm. Its function is as follows. The UvrABC repair system catalyzes the recognition and processing of DNA lesions. UvrC both incises the 5' and 3' sides of the lesion. The N-terminal half is responsible for the 3' incision and the C-terminal half is responsible for the 5' incision. The sequence is that of UvrABC system protein C from Paenarthrobacter aurescens (strain TC1).